Here is a 33-residue protein sequence, read N- to C-terminus: Beta-amanitin proprotein (33 aa).

Residues 1-10 (MSDINATRLP) constitute a propeptide that is removed on maturation. Positions 11–18 (IWGIGCDP) form a cross-link, cyclopeptide (Ile-Pro). Positions 12 to 16 (WGIGC) form a cross-link, 2'-cysteinyl-6'-hydroxytryptophan sulfoxide (Trp-Cys). A propeptide spanning residues 19–33 (CVGDDVTAVLTRGEA) is cleaved from the precursor.

Belongs to the MSDIN fungal toxin family. Post-translationally, processed by the macrocyclase-peptidase enzyme POPB to yield a toxic cyclic decapeptide. POPB first removes 10 residues from the N-terminus. Conformational trapping of the remaining peptide forces the enzyme to release this intermediate rather than proceed to macrocyclization. The enzyme rebinds the remaining peptide in a different conformation and catalyzes macrocyclization of the N-terminal 8 residues.

Toxin belonging to the bicyclic octapeptides amatoxins that acts by binding non-competitively to RNA polymerase II and greatly slowing the elongation of transcripts from target promoters. The polypeptide is Beta-amanitin proprotein (Amanita pallidorosea).